We begin with the raw amino-acid sequence, 336 residues long: tRNA N6-adenosine threonylcarbamoyltransferase (336 aa).

Positions 111 and 115 each coordinate Fe cation. Substrate contacts are provided by residues 134-138 (VVSGG), aspartate 167, glycine 180, aspartate 184, and asparagine 272. Aspartate 300 serves as a coordination point for Fe cation.

This sequence belongs to the KAE1 / TsaD family. Requires Fe(2+) as cofactor.

The protein localises to the cytoplasm. It catalyses the reaction L-threonylcarbamoyladenylate + adenosine(37) in tRNA = N(6)-L-threonylcarbamoyladenosine(37) in tRNA + AMP + H(+). Functionally, required for the formation of a threonylcarbamoyl group on adenosine at position 37 (t(6)A37) in tRNAs that read codons beginning with adenine. Is involved in the transfer of the threonylcarbamoyl moiety of threonylcarbamoyl-AMP (TC-AMP) to the N6 group of A37, together with TsaE and TsaB. TsaD likely plays a direct catalytic role in this reaction. The protein is tRNA N6-adenosine threonylcarbamoyltransferase of Caldicellulosiruptor bescii (strain ATCC BAA-1888 / DSM 6725 / KCTC 15123 / Z-1320) (Anaerocellum thermophilum).